The sequence spans 152 residues: Small ribosomal subunit protein bS6 (152 aa).

The segment at 96-152 (HEEGPSAMLQKRDRDDRGPREGGDRGPRREFGDRPPRRDGDFQRGPRPDRAPREDRA) is disordered.

This sequence belongs to the bacterial ribosomal protein bS6 family.

Its function is as follows. Binds together with bS18 to 16S ribosomal RNA. The sequence is that of Small ribosomal subunit protein bS6 from Rhizobium etli (strain ATCC 51251 / DSM 11541 / JCM 21823 / NBRC 15573 / CFN 42).